The primary structure comprises 229 residues: PKHD-type hydroxylase BBta_1313 (229 aa).

Positions 78 to 180 (HIFPPLFNRY…RIASFFWLQS (103 aa)) constitute a Fe2OG dioxygenase domain. Fe cation contacts are provided by H98, D100, and H161. R171 is a 2-oxoglutarate binding site.

Fe(2+) serves as cofactor. L-ascorbate is required as a cofactor.

The sequence is that of PKHD-type hydroxylase BBta_1313 from Bradyrhizobium sp. (strain BTAi1 / ATCC BAA-1182).